The chain runs to 345 residues: D-fructose 1,6-bisphosphatase class 2/sedoheptulose 1,7-bisphosphatase (345 aa).

Mn(2+) is bound by residues Asp-33, Glu-57, Asp-97, and Glu-100. Substrate is bound by residues 100-102 (EGT), Tyr-131, 176-178 (RDR), and 198-200 (DGD). Glu-225 contacts Mn(2+).

The protein belongs to the FBPase class 2 family. Homotetramer. The cofactor is Mn(2+).

The enzyme catalyses beta-D-fructose 1,6-bisphosphate + H2O = beta-D-fructose 6-phosphate + phosphate. It carries out the reaction D-sedoheptulose 1,7-bisphosphate + H2O = D-sedoheptulose 7-phosphate + phosphate. It functions in the pathway carbohydrate biosynthesis; Calvin cycle. Catalyzes the hydrolysis of fructose 1,6-bisphosphate (Fru 1,6-P2) and sedoheptulose 1,7-bisphosphate (Sed 1,7-P2) to fructose 6-phosphate and sedoheptulose 7-phosphate, respectively. The protein is D-fructose 1,6-bisphosphatase class 2/sedoheptulose 1,7-bisphosphatase of Nostoc sp. (strain PCC 7120 / SAG 25.82 / UTEX 2576).